The chain runs to 311 residues: Acetyl-coenzyme A carboxylase carboxyl transferase subunit alpha (311 aa).

One can recognise a CoA carboxyltransferase C-terminal domain in the interval 36–286 (NLEKEVAKVY…ASYFVSKLEK (251 aa)).

Belongs to the AccA family. In terms of assembly, acetyl-CoA carboxylase is a heterohexamer composed of biotin carboxyl carrier protein (AccB), biotin carboxylase (AccC) and two subunits each of ACCase subunit alpha (AccA) and ACCase subunit beta (AccD).

Its subcellular location is the cytoplasm. It catalyses the reaction N(6)-carboxybiotinyl-L-lysyl-[protein] + acetyl-CoA = N(6)-biotinyl-L-lysyl-[protein] + malonyl-CoA. It participates in lipid metabolism; malonyl-CoA biosynthesis; malonyl-CoA from acetyl-CoA: step 1/1. Functionally, component of the acetyl coenzyme A carboxylase (ACC) complex. First, biotin carboxylase catalyzes the carboxylation of biotin on its carrier protein (BCCP) and then the CO(2) group is transferred by the carboxyltransferase to acetyl-CoA to form malonyl-CoA. The polypeptide is Acetyl-coenzyme A carboxylase carboxyl transferase subunit alpha (Campylobacter curvus (strain 525.92)).